A 468-amino-acid polypeptide reads, in one-letter code: Methylenetetrahydrofolate--tRNA-(uracil-5-)-methyltransferase TrmFO (468 aa).

Gly-13 to Gly-18 contributes to the FAD binding site.

Belongs to the MnmG family. TrmFO subfamily. FAD is required as a cofactor.

Its subcellular location is the cytoplasm. It carries out the reaction uridine(54) in tRNA + (6R)-5,10-methylene-5,6,7,8-tetrahydrofolate + NADH + H(+) = 5-methyluridine(54) in tRNA + (6S)-5,6,7,8-tetrahydrofolate + NAD(+). The catalysed reaction is uridine(54) in tRNA + (6R)-5,10-methylene-5,6,7,8-tetrahydrofolate + NADPH + H(+) = 5-methyluridine(54) in tRNA + (6S)-5,6,7,8-tetrahydrofolate + NADP(+). Functionally, catalyzes the folate-dependent formation of 5-methyl-uridine at position 54 (M-5-U54) in all tRNAs. In Bartonella henselae (strain ATCC 49882 / DSM 28221 / CCUG 30454 / Houston 1) (Rochalimaea henselae), this protein is Methylenetetrahydrofolate--tRNA-(uracil-5-)-methyltransferase TrmFO.